Consider the following 258-residue polypeptide: Imidazole glycerol phosphate synthase subunit HisF (258 aa).

Residues Asp-11 and Asp-130 contribute to the active site.

This sequence belongs to the HisA/HisF family. In terms of assembly, heterodimer of HisH and HisF.

The protein localises to the cytoplasm. The enzyme catalyses 5-[(5-phospho-1-deoxy-D-ribulos-1-ylimino)methylamino]-1-(5-phospho-beta-D-ribosyl)imidazole-4-carboxamide + L-glutamine = D-erythro-1-(imidazol-4-yl)glycerol 3-phosphate + 5-amino-1-(5-phospho-beta-D-ribosyl)imidazole-4-carboxamide + L-glutamate + H(+). It participates in amino-acid biosynthesis; L-histidine biosynthesis; L-histidine from 5-phospho-alpha-D-ribose 1-diphosphate: step 5/9. In terms of biological role, IGPS catalyzes the conversion of PRFAR and glutamine to IGP, AICAR and glutamate. The HisF subunit catalyzes the cyclization activity that produces IGP and AICAR from PRFAR using the ammonia provided by the HisH subunit. This Escherichia fergusonii (strain ATCC 35469 / DSM 13698 / CCUG 18766 / IAM 14443 / JCM 21226 / LMG 7866 / NBRC 102419 / NCTC 12128 / CDC 0568-73) protein is Imidazole glycerol phosphate synthase subunit HisF.